Here is a 267-residue protein sequence, read N- to C-terminus: 14-3-3-like protein GF14 chi (267 aa).

Alanine 2 carries the N-acetylalanine modification. Phosphoserine is present on residues serine 72 and serine 195. Position 216 is a phosphothreonine (threonine 216). Residue serine 267 is modified to Phosphoserine.

This sequence belongs to the 14-3-3 family. As to quaternary structure, interacts with TPK1. Interacts with the isocitrate dehydrogenase IDH3, and malate dehydrogenases MDH1 and MDH2. Interacts with DREB1A and DREB1B in the nucleus. Interacts with CINV1.

It localises to the nucleus. It is found in the cytoplasm. Functionally, is associated with a DNA binding complex that binds to the G box, a well-characterized cis-acting DNA regulatory element found in plant genes. Involved in the regulation of nutrient metabolism. In Arabidopsis thaliana (Mouse-ear cress), this protein is 14-3-3-like protein GF14 chi (GRF1).